The following is a 500-amino-acid chain: MTEQVQDENKLIAERRAKLDSIRPNCSANAHPNTFRRTHKAAELQEKYGQNTKEELEALGFRTSIAGRIMAKRGPFLVIQDVSGRIQAYAEKGVQADLKDRYQGLDIGDIIGVTGQLHLSGKGDLYVNMEEYQLLTKALRPLPEKFHGLTDQETRYRQRYVDLIVNEESRQAFVMRSKVVAAIRNFMIKKEFMEVETPMMHVIPGGASARPFITHHNALDMPMYLRIAPELYLKRLVVGGFERVFEINRNFRNEGLSPRHNPEFTMMEFYMAYADYQDLMDLTEELLSSIAIELLGSAQMPYGEHTVDFGGPYARLSMLEAIQKYNPDNATIQAMTYEQVKDLEFMRELAISLGIKIEKFWTCGQLLEEIFGETAEWQLMQPTFITGYPADISPLARRNDDNHFITDRFEFFIGGREVANGFSELNDAQDQDSRFKAQVDAKDAGDDEAMFYDADYITALEHGLPPTAGQGIGIDRLVMLFTNTHTIRDVILFPAMRPQA.

Mg(2+) is bound by residues Glu410 and Glu417.

The protein belongs to the class-II aminoacyl-tRNA synthetase family. Homodimer. Mg(2+) is required as a cofactor.

Its subcellular location is the cytoplasm. The enzyme catalyses tRNA(Lys) + L-lysine + ATP = L-lysyl-tRNA(Lys) + AMP + diphosphate. This chain is Lysine--tRNA ligase, found in Shewanella oneidensis (strain ATCC 700550 / JCM 31522 / CIP 106686 / LMG 19005 / NCIMB 14063 / MR-1).